A 133-amino-acid polypeptide reads, in one-letter code: Large-conductance mechanosensitive channel (133 aa).

The next 2 helical transmembrane spans lie at 10 to 30 (FAVKGNVVDMAVGIVIGAAFG) and 76 to 96 (GIFVQTLVDFIIIAFAIFLVV).

Belongs to the MscL family. Homopentamer.

The protein resides in the cell inner membrane. Channel that opens in response to stretch forces in the membrane lipid bilayer. May participate in the regulation of osmotic pressure changes within the cell. This Chlorobium phaeobacteroides (strain BS1) protein is Large-conductance mechanosensitive channel.